The primary structure comprises 333 residues: NADH-quinone oxidoreductase subunit H (333 aa).

Helical transmembrane passes span 8-28, 75-95, 108-128, 154-174, 191-211, 251-271, 273-293, and 312-332; these read VLAA…YLVW, ILFM…FVTI, IGLL…LLAG, MLIT…IEIV, PGLF…CSLA, IVIG…CPFG, FPGV…FIWI, and ILIP…KVFA.

The protein belongs to the complex I subunit 1 family. In terms of assembly, NDH-1 is composed of 14 different subunits. Subunits NuoA, H, J, K, L, M, N constitute the membrane sector of the complex.

It is found in the cell inner membrane. The catalysed reaction is a quinone + NADH + 5 H(+)(in) = a quinol + NAD(+) + 4 H(+)(out). Functionally, NDH-1 shuttles electrons from NADH, via FMN and iron-sulfur (Fe-S) centers, to quinones in the respiratory chain. The immediate electron acceptor for the enzyme in this species is believed to be ubiquinone. Couples the redox reaction to proton translocation (for every two electrons transferred, four hydrogen ions are translocated across the cytoplasmic membrane), and thus conserves the redox energy in a proton gradient. This subunit may bind ubiquinone. This is NADH-quinone oxidoreductase subunit H from Desulfotalea psychrophila (strain LSv54 / DSM 12343).